Consider the following 191-residue polypeptide: Prostaglandin-H2 D-isomerase (191 aa).

The first 24 residues, 1-24 (MATPNRPWMGLLLLGVLGVLQTPA), serve as a signal peptide directing secretion. The N-linked (GlcNAc...) asparagine glycan is linked to asparagine 51. Cysteine 65 (nucleophile) is an active-site residue. Residue asparagine 78 is glycosylated (N-linked (GlcNAc...) asparagine). Cysteine 89 and cysteine 186 form a disulfide bridge.

Belongs to the calycin superfamily. Lipocalin family. In terms of assembly, monomer. As to expression, in the male reproductive system, it is expressed in the testis and epididymis, and is secreted into the seminal fluid.

It localises to the rough endoplasmic reticulum. The protein resides in the nucleus membrane. Its subcellular location is the golgi apparatus. The protein localises to the cytoplasm. It is found in the perinuclear region. It localises to the secreted. It carries out the reaction prostaglandin H2 = prostaglandin D2. In terms of biological role, catalyzes the conversion of PGH2 to PGD2, a prostaglandin involved in smooth muscle contraction/relaxation and a potent inhibitor of platelet aggregation. Involved in a variety of CNS functions, such as sedation, NREM sleep and PGE2-induced allodynia, and may have an anti-apoptotic role in oligodendrocytes. Binds small non-substrate lipophilic molecules, including biliverdin, bilirubin, retinal, retinoic acid and thyroid hormone, and may act as a scavenger for harmful hydrophobic molecules and as a secretory retinoid and thyroid hormone transporter. Possibly involved in development and maintenance of the blood-brain, blood-retina, blood-aqueous humor and blood-testis barrier. It is likely to play important roles in both maturation and maintenance of the central nervous system and male reproductive system. Involved in PLA2G3-dependent maturation of mast cells. PLA2G3 is secreted by immature mast cells and acts on nearby fibroblasts upstream to PTDGS to synthesize PGD2, which in turn promotes mast cell maturation and degranulation via PTGDR. The chain is Prostaglandin-H2 D-isomerase (PTGDS) from Ovis aries (Sheep).